A 163-amino-acid polypeptide reads, in one-letter code: MNSAGRVHRSRAGSRGHAAISPLTMASFSVARGIRSSNVYDDTDDELSILTFFSAVRRNRLTSSLPPILSARCSSACFSVRIVLPLSLTISISALMYSTNSALGRKLTGAFSIQTNIEQSCGFFRTSIMATLPPIECPIIIGPPLVFNSCFVIKCFTSSDMTS.

The chain crosses the membrane as a helical span at residues alanine 76–methionine 96.

The protein resides in the membrane. Involved in yeast cell wall biogenesis. In Saccharomyces cerevisiae (strain ATCC 204508 / S288c) (Baker's yeast), this protein is Protein NAG1 (NAG1).